A 174-amino-acid polypeptide reads, in one-letter code: Gamma-crystallin E (174 aa).

2 Beta/gamma crystallin 'Greek key' domains span residues 2–40 (GKIT…RVDS) and 41–83 (GCWM…RLIP). The interval 84 to 87 (HSSS) is connecting peptide. 2 Beta/gamma crystallin 'Greek key' domains span residues 88 to 128 (HRIK…HVME) and 129 to 171 (GYWV…RRIM).

Belongs to the beta/gamma-crystallin family. Detected in the superior olivary complex of the auditory hindbrain.

Its function is as follows. Crystallins are the dominant structural components of the vertebrate eye lens. This chain is Gamma-crystallin E (Cryge), found in Mus musculus (Mouse).